A 251-amino-acid chain; its full sequence is 3-deoxy-manno-octulosonate cytidylyltransferase (251 aa).

This sequence belongs to the KdsB family.

It localises to the cytoplasm. The catalysed reaction is 3-deoxy-alpha-D-manno-oct-2-ulosonate + CTP = CMP-3-deoxy-beta-D-manno-octulosonate + diphosphate. Its pathway is nucleotide-sugar biosynthesis; CMP-3-deoxy-D-manno-octulosonate biosynthesis; CMP-3-deoxy-D-manno-octulosonate from 3-deoxy-D-manno-octulosonate and CTP: step 1/1. It participates in bacterial outer membrane biogenesis; lipopolysaccharide biosynthesis. Its function is as follows. Activates KDO (a required 8-carbon sugar) for incorporation into bacterial lipopolysaccharide in Gram-negative bacteria. This Geotalea uraniireducens (strain Rf4) (Geobacter uraniireducens) protein is 3-deoxy-manno-octulosonate cytidylyltransferase.